We begin with the raw amino-acid sequence, 837 residues long: Striatin-interacting protein 1 (837 aa).

Met-1 carries the N-acetylmethionine modification. Disordered regions lie at residues 1–66 (MEPA…SESP) and 333–423 (AASP…KGLP). Pro residues predominate over residues 18-35 (PQPPPPPPPATAQPPPGA). Basic and acidic residues predominate over residues 47–60 (KAREFNRNQRKDSE). Phosphoserine occurs at positions 59, 335, and 339. Residues 356–377 (KALIKQDNLDAFNERDPYKADD) show a composition bias toward basic and acidic residues. Residues 378–391 (SREEEEENDDDNSL) are compositionally biased toward acidic residues. Position 788 is a phosphoserine (Ser-788). A required for STRIPAK core complex formation region spans residues 796-837 (DNCLQSVLGQRVDLPEDFQMNYDLWLEREVFSKPISWEELLQ).

This sequence belongs to the STRIP family. Part of the core of STRIPAK complexes composed of PP2A catalytic and scaffolding subunits, the striatins (PP2A regulatory subunits), the striatin-associated proteins MOB4, STRIP1 and STRIP2, PDCD10 and members of the STE20 kinases, such as STK24 and STK26. The STRIPAK complex can be extended by adapter proteins such as SLMAP:SIKE1, CTTNBP2 or CTTNBP2NL. Interacts with CDC42BPB. Interacts with CTTNBP2NL.

Its subcellular location is the cytoplasm. Functionally, plays a role in the regulation of cell morphology and cytoskeletal organization. Required in the cortical actin filament dynamics and cell shape. Part of the striatin-interacting phosphatase and kinase (STRIPAK) complexes. STRIPAK complexes have critical roles in protein (de)phosphorylation and are regulators of multiple signaling pathways including Hippo, MAPK, nuclear receptor and cytoskeleton remodeling. Different types of STRIPAK complexes are involved in a variety of biological processes such as cell growth, differentiation, apoptosis, metabolism and immune regulation. In Macaca fascicularis (Crab-eating macaque), this protein is Striatin-interacting protein 1 (STRIP1).